A 510-amino-acid chain; its full sequence is Ankyrin repeat domain-containing protein 13C-A (510 aa).

Over residues 1–19 the composition is skewed to basic and acidic residues; the sequence is MTGEKIRSLHKDQKPSKDE. The segment at 1 to 35 is disordered; sequence MTGEKIRSLHKDQKPSKDEDLLEPDEEATAGGTFT. ANK repeat units lie at residues 80-111, 112-141, and 145-174; these read DVYF…QKDS, HGNT…PVKV, and QGWS…QQSR.

It localises to the endoplasmic reticulum membrane. Functionally, acts as a molecular chaperone for G protein-coupled receptors, regulating their biogenesis and exit from the ER. The chain is Ankyrin repeat domain-containing protein 13C-A (ankrd13c-a) from Xenopus laevis (African clawed frog).